We begin with the raw amino-acid sequence, 557 residues long: MPMLKDPSQKYRPFAPIALRDRTWPDRVIDKAPLWLSTDLRDGNQSLIEPMDAAKKMRFFKTLVQVGLKEIEVGFPSASQTDFDFVRELIEGGHIPDDVTIQVLTQARDDLIERTFESLKGAKKAIVHYYNACAPSFRRIVFDQDKEGVKRIAVAAGRTIKRLAAAAPETRWGFEYSPEVFSSTESDFAVEVCNAVVEVFQPTPANRLILNLPATIECATPNHYADQIEWFCRHVDRRDSVIVSLHTHNDRGTGVAASELGLMAGADRVEGCLFGNGERTGNVDLVTLALNLYTQGVDPGLDFSDIDAVRKVVEECNQLPVHPRHPYVGDLVHTAFSGSHQDAIRKGFAQQDPEGVWEVPYLPIDPADIGRSYEAVIRVNSQSGKGGIAYLLEQEYGISLPRRMQIEFSQVVQKETDRLGLEMSAAQIHALLEAEYLRAETPYALKGHRLQEENGTCALDVEVFDKGESRHWRGIGKGPLEALVACLPVRVEIMDYHEHAIGAGSHARAAAYIELRLDGQRSLHGLGIDENLTTASIRALFSALNRALGQQASIRAA.

Positions proline 33–aspartate 307 constitute a Pyruvate carboxyltransferase domain. 4 residues coordinate Mg(2+): aspartate 42, histidine 246, histidine 248, and asparagine 282. Positions alanine 439–alanine 557 are regulatory domain.

Belongs to the alpha-IPM synthase/homocitrate synthase family. LeuA type 2 subfamily. Homodimer. Requires Mg(2+) as cofactor.

It localises to the cytoplasm. It carries out the reaction 3-methyl-2-oxobutanoate + acetyl-CoA + H2O = (2S)-2-isopropylmalate + CoA + H(+). Its pathway is amino-acid biosynthesis; L-leucine biosynthesis; L-leucine from 3-methyl-2-oxobutanoate: step 1/4. Catalyzes the condensation of the acetyl group of acetyl-CoA with 3-methyl-2-oxobutanoate (2-ketoisovalerate) to form 3-carboxy-3-hydroxy-4-methylpentanoate (2-isopropylmalate). The chain is 2-isopropylmalate synthase from Azotobacter vinelandii (strain DJ / ATCC BAA-1303).